We begin with the raw amino-acid sequence, 179 residues long: Coatomer subunit zeta-2 (179 aa).

Belongs to the adaptor complexes small subunit family. Oligomeric complex that consists of at least the alpha, beta, beta', gamma, delta, epsilon and zeta subunits.

It localises to the cytoplasm. It is found in the golgi apparatus membrane. The protein resides in the cytoplasmic vesicle. Its subcellular location is the COPI-coated vesicle membrane. Its function is as follows. The coatomer is a cytosolic protein complex that binds to dilysine motifs and reversibly associates with Golgi non-clathrin-coated vesicles, which further mediate biosynthetic protein transport from the ER, via the Golgi up to the trans Golgi network. Coatomer complex is required for budding from Golgi membranes, and is essential for the retrograde Golgi-to-ER transport of dilysine-tagged proteins. The zeta subunit may be involved in regulating the coat assembly and, hence, the rate of biosynthetic protein transport due to its association-dissociation properties with the coatomer complex. The protein is Coatomer subunit zeta-2 of Arabidopsis thaliana (Mouse-ear cress).